The sequence spans 227 residues: GTP:AMP phosphotransferase AK3, mitochondrial (227 aa).

GTP is bound by residues Gly-17, Gly-19, Lys-20, Gly-21, and Thr-22. Lys-20 is subject to N6-succinyllysine. At Lys-34 the chain carries N6-acetyllysine. The residue at position 37 (Ser-37) is a Phosphoserine. Residues 37–66 (SSGDLLRDNMLRGTEIGVLAKAFIDQGKLI) form an NMP region. The AMP site is built by Ser-38 and Arg-43. Lys-57 is modified (N6-succinyllysine). Residue Lys-64 participates in AMP binding. 2 positions are modified to N6-acetyllysine; alternate: Lys-64 and Lys-80. N6-succinyllysine; alternate is present on residues Lys-64 and Lys-80. Residues Gly-91, Arg-94, and Gln-98 each contribute to the AMP site. Residues 127–164 (ARWIHPASGRVYNIEFNPPKTVGIDDLTGEPLIQREDD) form an LID region. Arg-128, Tyr-138, Asn-139, Arg-161, and Arg-172 together coordinate GTP. Lys-174 and Lys-189 each carry N6-acetyllysine; alternate. Residues Lys-174 and Lys-189 each carry the N6-succinyllysine; alternate modification. Position 201 (Thr-201) interacts with GTP. Lys-203 is subject to N6-acetyllysine.

This sequence belongs to the adenylate kinase family. AK3 subfamily. Monomer. Highly expressed in heart, skeletal muscle and liver, moderately expressed in pancreas and kidney, and weakly expressed in placenta, brain and lung.

The protein resides in the mitochondrion matrix. It carries out the reaction a ribonucleoside 5'-triphosphate + AMP = a ribonucleoside 5'-diphosphate + ADP. The enzyme catalyses GTP + AMP = GDP + ADP. The catalysed reaction is ITP + AMP = IDP + ADP. Its activity is regulated as follows. Inhibited by ATP. Functionally, mitochondrial adenylate kinase with a specific GTP:AMP phosphotransferase activity. Could also use ITP as phosphate donor. Its physiological function is to recycle GTP into GDP which is necessary for the TCA cycle in the mitochondrial matrix. This chain is GTP:AMP phosphotransferase AK3, mitochondrial, found in Homo sapiens (Human).